We begin with the raw amino-acid sequence, 80 residues long: RNA-binding protein Hfq (80 aa).

The Sm domain maps to 10–69 (DPFLNLLRKEHVPVSIYLVNGIKLQGHIESFDQYVVLLRNTVTQMVYKHAISTVVPGRPV).

This sequence belongs to the Hfq family. As to quaternary structure, homohexamer.

In terms of biological role, RNA chaperone that binds small regulatory RNA (sRNAs) and mRNAs to facilitate mRNA translational regulation in response to envelope stress, environmental stress and changes in metabolite concentrations. Also binds with high specificity to tRNAs. In Leptothrix cholodnii (strain ATCC 51168 / LMG 8142 / SP-6) (Leptothrix discophora (strain SP-6)), this protein is RNA-binding protein Hfq.